The sequence spans 205 residues: Endoplasmic reticulum membrane protein complex subunit 10 (205 aa).

The N-terminal stretch at 1–17 (MLVRLLRVILLASMVFC) is a signal peptide. Residues 18 to 172 (ADILQLSYSD…VKEVSWFQKN (155 aa)) lie on the Lumenal side of the membrane. N-linked (GlcNAc...) asparagine glycosylation is present at Asn47. The helical transmembrane segment at 173 to 190 (WKMLLLGLLIYNFVAGSA) threads the bilayer. Residues 191–205 (KKQQQGGAGADQKTE) are Cytoplasmic-facing.

As to quaternary structure, component of the ER membrane protein complex (EMC).

The protein resides in the endoplasmic reticulum membrane. Functionally, part of the endoplasmic reticulum membrane protein complex (EMC) that enables the energy-independent insertion into endoplasmic reticulum membranes of newly synthesized membrane proteins. Preferentially accommodates proteins with transmembrane domains that are weakly hydrophobic or contain destabilizing features such as charged and aromatic residues. Involved in the cotranslational insertion of multi-pass membrane proteins in which stop-transfer membrane-anchor sequences become ER membrane spanning helices. It is also required for the post-translational insertion of tail-anchored/TA proteins in endoplasmic reticulum membranes. By mediating the proper cotranslational insertion of N-terminal transmembrane domains in an N-exo topology, with translocated N-terminus in the lumen of the ER, controls the topology of multi-pass membrane proteins. The polypeptide is Endoplasmic reticulum membrane protein complex subunit 10 (Saccharomyces cerevisiae (strain ATCC 204508 / S288c) (Baker's yeast)).